Here is a 230-residue protein sequence, read N- to C-terminus: MEITWLGHGTFQFRLPSGQVLVMDPWIDGNPAYPKGCKIDRVDTICISHGHFDHIHDAVPLAKQFDPEVVAIFETAHWLESKGVAKTRPMNKGGSQKVGEVMVTMTHAVHSCGIVDEGKIIYGGEAAGYVLHLPDKRVIYFSGDTNVFSDMALIEQLYHPELAFLPIGDLYTMSPHEAALACRLLRARKVIPMHFGTFPPLTGRPDDLRERIRGLETEVWALEPGKPVQW.

The protein belongs to the UPF0173 family.

This chain is UPF0173 metal-dependent hydrolase Acid_3917, found in Solibacter usitatus (strain Ellin6076).